A 452-amino-acid polypeptide reads, in one-letter code: Adenylosuccinate synthetase isozyme 1 (452 aa).

A disordered region spans residues 1–22 (MSGTRASNDRSSHPGGHKRPRY). Residues 37–43 (GDEGKGK) and 65–67 (GHT) contribute to the GTP site. D38 acts as the Proton acceptor in catalysis. The Mg(2+) site is built by D38 and G65. D38 is a binding site for substrate. Residues 38–41 (DEGK), 63–66 (NAGH), T158, R172, N251, T266, and R330 contribute to the IMP site. The Proton donor role is filled by H66. Residue 326–332 (VTTGRKR) participates in substrate binding. GTP contacts are provided by residues R332, 358 to 360 (KLD), and 440 to 443 (GVGK).

This sequence belongs to the adenylosuccinate synthetase family. Homodimer. It depends on Mg(2+) as a cofactor.

The protein resides in the cytoplasm. The catalysed reaction is IMP + L-aspartate + GTP = N(6)-(1,2-dicarboxyethyl)-AMP + GDP + phosphate + 2 H(+). It participates in purine metabolism; AMP biosynthesis via de novo pathway; AMP from IMP: step 1/2. Functionally, component of the purine nucleotide cycle (PNC), which interconverts IMP and AMP to regulate the nucleotide levels in various tissues, and which contributes to glycolysis and ammoniagenesis. Catalyzes the first committed step in the biosynthesis of AMP from IMP. This is Adenylosuccinate synthetase isozyme 1 (adss1) from Xenopus tropicalis (Western clawed frog).